Consider the following 364-residue polypeptide: Putative acetyl-CoA C-acetyltransferase YhfS (364 aa).

Cys82 acts as the Acyl-thioester intermediate in catalysis. His318 functions as the Proton acceptor in the catalytic mechanism.

Belongs to the thiolase-like superfamily. Thiolase family.

May be involved in fatty acid metabolism. The protein is Putative acetyl-CoA C-acetyltransferase YhfS (yhfS) of Bacillus subtilis (strain 168).